A 392-amino-acid polypeptide reads, in one-letter code: 23S rRNA (uracil(747)-C(5))-methyltransferase RlmC (392 aa).

[4Fe-4S] cluster-binding residues include Cys4, Cys12, Cys15, and Cys93. Residues Gln218, Phe247, Glu275, and Asn321 each coordinate S-adenosyl-L-methionine. The active-site Nucleophile is Cys348.

Belongs to the class I-like SAM-binding methyltransferase superfamily. RNA M5U methyltransferase family. RlmC subfamily.

The enzyme catalyses uridine(747) in 23S rRNA + S-adenosyl-L-methionine = 5-methyluridine(747) in 23S rRNA + S-adenosyl-L-homocysteine + H(+). Catalyzes the formation of 5-methyl-uridine at position 747 (m5U747) in 23S rRNA. The polypeptide is 23S rRNA (uracil(747)-C(5))-methyltransferase RlmC (Haemophilus influenzae (strain 86-028NP)).